Reading from the N-terminus, the 91-residue chain is ATP synthase subunit c (91 aa).

2 consecutive transmembrane segments (helical) span residues 4–24 (LTMC…GTGI) and 53–73 (IGLA…LIIL).

Belongs to the ATPase C chain family. In terms of assembly, F-type ATPases have 2 components, F(1) - the catalytic core - and F(0) - the membrane proton channel. F(1) has five subunits: alpha(3), beta(3), gamma(1), delta(1), epsilon(1). F(0) has three main subunits: a(1), b(2) and c(10-14). The alpha and beta chains form an alternating ring which encloses part of the gamma chain. F(1) is attached to F(0) by a central stalk formed by the gamma and epsilon chains, while a peripheral stalk is formed by the delta and b chains.

The protein resides in the cell inner membrane. Functionally, f(1)F(0) ATP synthase produces ATP from ADP in the presence of a proton or sodium gradient. F-type ATPases consist of two structural domains, F(1) containing the extramembraneous catalytic core and F(0) containing the membrane proton channel, linked together by a central stalk and a peripheral stalk. During catalysis, ATP synthesis in the catalytic domain of F(1) is coupled via a rotary mechanism of the central stalk subunits to proton translocation. Key component of the F(0) channel; it plays a direct role in translocation across the membrane. A homomeric c-ring of between 10-14 subunits forms the central stalk rotor element with the F(1) delta and epsilon subunits. This Geobacter metallireducens (strain ATCC 53774 / DSM 7210 / GS-15) protein is ATP synthase subunit c.